A 222-amino-acid polypeptide reads, in one-letter code: 7-cyano-7-deazaguanine synthase (222 aa).

Residue 14 to 24 participates in ATP binding; that stretch reads FSGGQDSTTCL. Zn(2+)-binding residues include Cys-190, Cys-199, Cys-202, and Cys-205.

Belongs to the QueC family. In terms of assembly, homodimer. The cofactor is Zn(2+).

It catalyses the reaction 7-carboxy-7-deazaguanine + NH4(+) + ATP = 7-cyano-7-deazaguanine + ADP + phosphate + H2O + H(+). Its pathway is purine metabolism; 7-cyano-7-deazaguanine biosynthesis. Its function is as follows. Catalyzes the ATP-dependent conversion of 7-carboxy-7-deazaguanine (CDG) to 7-cyano-7-deazaguanine (preQ(0)). This chain is 7-cyano-7-deazaguanine synthase, found in Staphylococcus aureus (strain bovine RF122 / ET3-1).